The primary structure comprises 148 residues: UPF0756 membrane protein YeaL (148 aa).

Transmembrane regions (helical) follow at residues 14–34, 51–71, 86–106, and 112–132; these read ALGF…LIIV, LSIG…SGTL, LVAI…VTLM, and LVAG…GVPV.

It belongs to the UPF0756 family.

It localises to the cell membrane. This is UPF0756 membrane protein YeaL from Escherichia coli O157:H7.